A 521-amino-acid chain; its full sequence is Bifunctional purine biosynthesis protein PurH (521 aa).

The 145-residue stretch at M1–C145 folds into the MGS-like domain.

The protein belongs to the PurH family.

It catalyses the reaction (6R)-10-formyltetrahydrofolate + 5-amino-1-(5-phospho-beta-D-ribosyl)imidazole-4-carboxamide = 5-formamido-1-(5-phospho-D-ribosyl)imidazole-4-carboxamide + (6S)-5,6,7,8-tetrahydrofolate. It carries out the reaction IMP + H2O = 5-formamido-1-(5-phospho-D-ribosyl)imidazole-4-carboxamide. The protein operates within purine metabolism; IMP biosynthesis via de novo pathway; 5-formamido-1-(5-phospho-D-ribosyl)imidazole-4-carboxamide from 5-amino-1-(5-phospho-D-ribosyl)imidazole-4-carboxamide (10-formyl THF route): step 1/1. Its pathway is purine metabolism; IMP biosynthesis via de novo pathway; IMP from 5-formamido-1-(5-phospho-D-ribosyl)imidazole-4-carboxamide: step 1/1. The chain is Bifunctional purine biosynthesis protein PurH from Janthinobacterium sp. (strain Marseille) (Minibacterium massiliensis).